A 151-amino-acid chain; its full sequence is 6,7-dimethyl-8-ribityllumazine synthase (151 aa).

5-amino-6-(D-ribitylamino)uracil is bound by residues phenylalanine 15, 49-51 (AVE), and 73-75 (AVI). Position 78 to 79 (78 to 79 (ET)) interacts with (2S)-2-hydroxy-3-oxobutyl phosphate. The active-site Proton donor is the histidine 81. 5-amino-6-(D-ribitylamino)uracil is bound at residue phenylalanine 106. Arginine 120 serves as a coordination point for (2S)-2-hydroxy-3-oxobutyl phosphate.

Belongs to the DMRL synthase family. As to quaternary structure, forms an icosahedral capsid composed of 60 subunits, arranged as a dodecamer of pentamers.

The enzyme catalyses (2S)-2-hydroxy-3-oxobutyl phosphate + 5-amino-6-(D-ribitylamino)uracil = 6,7-dimethyl-8-(1-D-ribityl)lumazine + phosphate + 2 H2O + H(+). It functions in the pathway cofactor biosynthesis; riboflavin biosynthesis; riboflavin from 2-hydroxy-3-oxobutyl phosphate and 5-amino-6-(D-ribitylamino)uracil: step 1/2. Functionally, catalyzes the formation of 6,7-dimethyl-8-ribityllumazine by condensation of 5-amino-6-(D-ribitylamino)uracil with 3,4-dihydroxy-2-butanone 4-phosphate. This is the penultimate step in the biosynthesis of riboflavin. The sequence is that of 6,7-dimethyl-8-ribityllumazine synthase from Coxiella burnetii (strain CbuG_Q212) (Coxiella burnetii (strain Q212)).